We begin with the raw amino-acid sequence, 191 residues long: Ribonuclease HII (191 aa).

Residues 4 to 191 (YTAAGLDEVG…HRKTFLSKIQ (188 aa)) enclose the RNase H type-2 domain. Residues D10, E11, and D106 each contribute to the a divalent metal cation site.

Belongs to the RNase HII family. Mn(2+) serves as cofactor. The cofactor is Mg(2+).

Its subcellular location is the cytoplasm. It catalyses the reaction Endonucleolytic cleavage to 5'-phosphomonoester.. In terms of biological role, endonuclease that specifically degrades the RNA of RNA-DNA hybrids. The protein is Ribonuclease HII of Prochlorococcus marinus (strain SARG / CCMP1375 / SS120).